Consider the following 130-residue polypeptide: Small ribosomal subunit protein uS9 (130 aa).

Positions 109 to 130 are disordered; sequence RAKERKKYGLKAARRAPQFSKR. Residues 111 to 130 show a composition bias toward basic residues; sequence KERKKYGLKAARRAPQFSKR.

Belongs to the universal ribosomal protein uS9 family.

In Heliobacterium modesticaldum (strain ATCC 51547 / Ice1), this protein is Small ribosomal subunit protein uS9.